A 273-amino-acid chain; its full sequence is Ribosomal RNA small subunit methyltransferase A (273 aa).

Positions 18, 20, 45, 66, 91, and 113 each coordinate S-adenosyl-L-methionine.

It belongs to the class I-like SAM-binding methyltransferase superfamily. rRNA adenine N(6)-methyltransferase family. RsmA subfamily.

The protein resides in the cytoplasm. It catalyses the reaction adenosine(1518)/adenosine(1519) in 16S rRNA + 4 S-adenosyl-L-methionine = N(6)-dimethyladenosine(1518)/N(6)-dimethyladenosine(1519) in 16S rRNA + 4 S-adenosyl-L-homocysteine + 4 H(+). In terms of biological role, specifically dimethylates two adjacent adenosines (A1518 and A1519) in the loop of a conserved hairpin near the 3'-end of 16S rRNA in the 30S particle. May play a critical role in biogenesis of 30S subunits. This Escherichia coli O139:H28 (strain E24377A / ETEC) protein is Ribosomal RNA small subunit methyltransferase A.